A 287-amino-acid chain; its full sequence is uncharacterized protein (287 aa).

Residues glycine 43–serine 50, aspartate 90–glycine 93, and aspartate 156–glutamate 159 contribute to the GTP site. The region spanning glycine 48–isoleucine 140 is the G domain.

It to E.coli YkfA and YeeP.

This is an uncharacterized protein from Escherichia coli (strain K12).